Reading from the N-terminus, the 162-residue chain is Phosphopantetheine adenylyltransferase (162 aa).

Ser11 serves as a coordination point for substrate. ATP-binding positions include 11–12 and His19; that span reads SF. Residues Lys43, Val76, and Arg90 each contribute to the substrate site. ATP-binding positions include 91–93, Glu101, and 126–132; these read GLR and HLYISSS.

The protein belongs to the bacterial CoaD family. As to quaternary structure, homohexamer. The cofactor is Mg(2+).

Its subcellular location is the cytoplasm. It catalyses the reaction (R)-4'-phosphopantetheine + ATP + H(+) = 3'-dephospho-CoA + diphosphate. It participates in cofactor biosynthesis; coenzyme A biosynthesis; CoA from (R)-pantothenate: step 4/5. Functionally, reversibly transfers an adenylyl group from ATP to 4'-phosphopantetheine, yielding dephospho-CoA (dPCoA) and pyrophosphate. This Streptococcus pneumoniae (strain JJA) protein is Phosphopantetheine adenylyltransferase.